A 618-amino-acid chain; its full sequence is DNA mismatch repair protein MutL (618 aa).

A disordered region spans residues Glu367 to Gly402. Gly residues predominate over residues Gly382–Thr392.

The protein belongs to the DNA mismatch repair MutL/HexB family.

This protein is involved in the repair of mismatches in DNA. It is required for dam-dependent methyl-directed DNA mismatch repair. May act as a 'molecular matchmaker', a protein that promotes the formation of a stable complex between two or more DNA-binding proteins in an ATP-dependent manner without itself being part of a final effector complex. This is DNA mismatch repair protein MutL from Salmonella paratyphi A (strain ATCC 9150 / SARB42).